Reading from the N-terminus, the 349-residue chain is Small ribosomal subunit biogenesis GTPase RsgA (349 aa).

Basic residues predominate over residues 1 to 11; the sequence is MSKKKLSKGQQ. The interval 1–29 is disordered; that stretch reads MSKKKLSKGQQRRVSANHQRRLKKTESKV. Residues 102–272 form the CP-type G domain; it reads HSVLTRPDYY…VIDSPGVREF (171 aa). GTP-binding positions include 158-161 and 212-220; these read NKID and GQSGVGKSS. Residues cysteine 296, cysteine 301, histidine 303, and cysteine 309 each contribute to the Zn(2+) site.

This sequence belongs to the TRAFAC class YlqF/YawG GTPase family. RsgA subfamily. Monomer. Associates with 30S ribosomal subunit, binds 16S rRNA. Requires Zn(2+) as cofactor.

The protein resides in the cytoplasm. Functionally, one of several proteins that assist in the late maturation steps of the functional core of the 30S ribosomal subunit. Helps release RbfA from mature subunits. May play a role in the assembly of ribosomal proteins into the subunit. Circularly permuted GTPase that catalyzes slow GTP hydrolysis, GTPase activity is stimulated by the 30S ribosomal subunit. This chain is Small ribosomal subunit biogenesis GTPase RsgA, found in Pectobacterium atrosepticum (strain SCRI 1043 / ATCC BAA-672) (Erwinia carotovora subsp. atroseptica).